We begin with the raw amino-acid sequence, 395 residues long: Probable G-protein coupled receptor npr-29 (395 aa).

Helical transmembrane passes span 38–58 (VVGFVINAWVLYVVAPLLFAP), 66–86 (ILFYIFALCVGDLMTMIAMLL), 89–109 (IELVFGTWQFSSMVCTSYLIF), and 148–168 (AIIQFCIAFAFVMILLWPVFA). A glycan (N-linked (GlcNAc...) asparagine) is linked at Asn-180. 3 helical membrane-spanning segments follow: residues 202 to 222 (FWFNLIACITSYAVPLFGIIY), 252 to 272 (VITTVLLLTVIYVLCWTPYWV), and 287 to 307 (IIIISYFIHLLPYISCVAYPL).

It belongs to the G-protein coupled receptor 1 family.

It is found in the cell membrane. Its function is as follows. Not known. Putative receptor. The polypeptide is Probable G-protein coupled receptor npr-29 (Caenorhabditis elegans).